The following is a 308-amino-acid chain: Probable plastid-lipid-associated protein 9, chloroplastic (308 aa).

Residues 1–55 constitute a chloroplast transit peptide; the sequence is MALIQHGSVSGTSAVRLSFSSSVSPPSSSPPLSRVSLNFQSEKKSCYRRMICRAM.

The protein belongs to the PAP/fibrillin family.

The protein localises to the plastid. It is found in the chloroplast. It localises to the plastoglobule. This chain is Probable plastid-lipid-associated protein 9, chloroplastic (PAP9), found in Arabidopsis thaliana (Mouse-ear cress).